The following is a 47-amino-acid chain: uncharacterized protein (47 aa).

Disordered regions lie at residues 1–20 and 25–47; these read MSTD…EEWQ and EKEK…NRKG. The segment covering 25 to 40 has biased composition (basic and acidic residues); it reads EKEKDENNRLFQEQKQ.

This is an uncharacterized protein from Dictyostelium discoideum (Social amoeba).